The following is a 261-amino-acid chain: Cytochrome c oxidase subunit 3 (261 aa).

Residues 1–15 are Mitochondrial matrix-facing; it reads MAHQAHPYHMVDPSP. Residues 16–34 traverse the membrane as a helical segment; sequence WPLTGATAALLMTSGLAIW. Topologically, residues 35 to 40 are mitochondrial intermembrane; the sequence is FHFHSL. A helical transmembrane segment spans residues 41–66; it reads LLLYLGLTLLLLTMIQWWRDIIREGT. Topologically, residues 67–72 are mitochondrial matrix; that stretch reads FQGHHT. The helical transmembrane segment at 73-105 threads the bilayer; that stretch reads PPVQKGLRYGMILFIVSEVFFFLGFFWAFYHSS. Residues 106 to 128 lie on the Mitochondrial intermembrane side of the membrane; the sequence is LAPTPELGGCWPPTGINPLDPFE. The helical transmembrane segment at 129-152 threads the bilayer; that stretch reads VPLLNTAVLLASGVTVTWAHHGLM. Topologically, residues 153–155 are mitochondrial matrix; the sequence is EGN. Residues 156–183 form a helical membrane-spanning segment; it reads RKEAIQALTLTIILGVYFTALQAMEYYE. Residues 184 to 190 are Mitochondrial intermembrane-facing; that stretch reads APFTIAD. The chain crosses the membrane as a helical span at residues 191 to 223; it reads GVYGTTFFVATGFHGLHVIIGSTFLAVCLLRQV. Topologically, residues 224-232 are mitochondrial matrix; the sequence is LYHFTSEHH. A helical membrane pass occupies residues 233–256; that stretch reads FGFEAAAWYWHFVDVVWLFLYVSI. Topologically, residues 257–261 are mitochondrial intermembrane; sequence YWWGS.

This sequence belongs to the cytochrome c oxidase subunit 3 family. In terms of assembly, component of the cytochrome c oxidase (complex IV, CIV), a multisubunit enzyme composed of 14 subunits. The complex is composed of a catalytic core of 3 subunits MT-CO1, MT-CO2 and MT-CO3, encoded in the mitochondrial DNA, and 11 supernumerary subunits COX4I, COX5A, COX5B, COX6A, COX6B, COX6C, COX7A, COX7B, COX7C, COX8 and NDUFA4, which are encoded in the nuclear genome. The complex exists as a monomer or a dimer and forms supercomplexes (SCs) in the inner mitochondrial membrane with NADH-ubiquinone oxidoreductase (complex I, CI) and ubiquinol-cytochrome c oxidoreductase (cytochrome b-c1 complex, complex III, CIII), resulting in different assemblies (supercomplex SCI(1)III(2)IV(1) and megacomplex MCI(2)III(2)IV(2)).

It is found in the mitochondrion inner membrane. The catalysed reaction is 4 Fe(II)-[cytochrome c] + O2 + 8 H(+)(in) = 4 Fe(III)-[cytochrome c] + 2 H2O + 4 H(+)(out). Functionally, component of the cytochrome c oxidase, the last enzyme in the mitochondrial electron transport chain which drives oxidative phosphorylation. The respiratory chain contains 3 multisubunit complexes succinate dehydrogenase (complex II, CII), ubiquinol-cytochrome c oxidoreductase (cytochrome b-c1 complex, complex III, CIII) and cytochrome c oxidase (complex IV, CIV), that cooperate to transfer electrons derived from NADH and succinate to molecular oxygen, creating an electrochemical gradient over the inner membrane that drives transmembrane transport and the ATP synthase. Cytochrome c oxidase is the component of the respiratory chain that catalyzes the reduction of oxygen to water. Electrons originating from reduced cytochrome c in the intermembrane space (IMS) are transferred via the dinuclear copper A center (CU(A)) of subunit 2 and heme A of subunit 1 to the active site in subunit 1, a binuclear center (BNC) formed by heme A3 and copper B (CU(B)). The BNC reduces molecular oxygen to 2 water molecules using 4 electrons from cytochrome c in the IMS and 4 protons from the mitochondrial matrix. The protein is Cytochrome c oxidase subunit 3 (MT-CO3) of Scyliorhinus canicula (Small-spotted catshark).